The following is a 329-amino-acid chain: Beta-ketoacyl-[acyl-carrier-protein] synthase III (329 aa).

Residues Cys114 and His255 contribute to the active site. Residues 256–260 (QANQR) are ACP-binding. Asn285 is an active-site residue.

The protein belongs to the thiolase-like superfamily. FabH family. Homodimer.

It is found in the cytoplasm. It catalyses the reaction malonyl-[ACP] + acetyl-CoA + H(+) = 3-oxobutanoyl-[ACP] + CO2 + CoA. It functions in the pathway lipid metabolism; fatty acid biosynthesis. In terms of biological role, catalyzes the condensation reaction of fatty acid synthesis by the addition to an acyl acceptor of two carbons from malonyl-ACP. Catalyzes the first condensation reaction which initiates fatty acid synthesis and may therefore play a role in governing the total rate of fatty acid production. Possesses both acetoacetyl-ACP synthase and acetyl transacylase activities. Its substrate specificity determines the biosynthesis of branched-chain and/or straight-chain of fatty acids. This Trichodesmium erythraeum (strain IMS101) protein is Beta-ketoacyl-[acyl-carrier-protein] synthase III.